The chain runs to 864 residues: Leucine--tRNA ligase (864 aa).

Positions 42-52 (PYPSGKLHMGH) match the 'HIGH' region motif. The 'KMSKS' region motif lies at 624–628 (KMSKS). Lys627 contributes to the ATP binding site.

This sequence belongs to the class-I aminoacyl-tRNA synthetase family.

Its subcellular location is the cytoplasm. The catalysed reaction is tRNA(Leu) + L-leucine + ATP = L-leucyl-tRNA(Leu) + AMP + diphosphate. This chain is Leucine--tRNA ligase, found in Burkholderia multivorans (strain ATCC 17616 / 249).